A 241-amino-acid polypeptide reads, in one-letter code: Small ribosomal subunit protein eS4 (241 aa).

An S4 RNA-binding domain is found at 37-100 (LPIVVWARDQ…GKHYRILRDK (64 aa)).

Belongs to the eukaryotic ribosomal protein eS4 family.

The sequence is that of Small ribosomal subunit protein eS4 from Methanospirillum hungatei JF-1 (strain ATCC 27890 / DSM 864 / NBRC 100397 / JF-1).